The chain runs to 361 residues: Polygalacturonase (361 aa).

A signal peptide spans 1 to 18 (MISANSLLISTLCAFAIA). Residues Cys-27 and Cys-43 are joined by a disulfide bond. PbH1 repeat units follow at residues 155–185 (CSDL…DVGS), 186–207 (SSNV…AVNS), 208–228 (GSTI…SVGS), 237–258 (VNGF…RIKT), and 266–288 (VTNV…VIEG). Residue Asp-200 is the Proton donor of the active site. Cys-202 and Cys-218 are oxidised to a cystine. Residue His-222 is part of the active site. Asn-318 and Asn-330 each carry an N-linked (GlcNAc...) asparagine glycan. An intrachain disulfide couples Cys-350 to Cys-361.

Belongs to the glycosyl hydrolase 28 family.

It catalyses the reaction (1,4-alpha-D-galacturonosyl)n+m + H2O = (1,4-alpha-D-galacturonosyl)n + (1,4-alpha-D-galacturonosyl)m.. The chain is Polygalacturonase (PGU1) from Saccharomyces cerevisiae (strain ATCC 204508 / S288c) (Baker's yeast).